The chain runs to 61 residues: Short neurotoxin 4 (61 aa).

Disulfide bonds link Cys3-Cys23, Cys17-Cys40, Cys42-Cys53, and Cys54-Cys59.

It belongs to the three-finger toxin family. Short-chain subfamily. Type I alpha-neurotoxin sub-subfamily. In terms of tissue distribution, expressed by the venom gland.

The protein localises to the secreted. Binds to muscle nicotinic acetylcholine receptor (nAChR) and inhibit acetylcholine from binding to the receptor, thereby impairing neuromuscular transmission. The sequence is that of Short neurotoxin 4 from Naja annulifera (Banded Egyptian cobra).